The primary structure comprises 56 residues: Large ribosomal subunit protein bL33 (56 aa).

This sequence belongs to the bacterial ribosomal protein bL33 family.

This Helicobacter hepaticus (strain ATCC 51449 / 3B1) protein is Large ribosomal subunit protein bL33.